The sequence spans 87 residues: Small ribosomal subunit protein bS16 (87 aa).

It belongs to the bacterial ribosomal protein bS16 family.

The protein is Small ribosomal subunit protein bS16 of Nitrosospira multiformis (strain ATCC 25196 / NCIMB 11849 / C 71).